We begin with the raw amino-acid sequence, 169 residues long: CRISPR system Cmr subunit Cmr5 (169 aa).

The protein belongs to the CRISPR system Cmr5 family. Monomer in isolation. Part of the type III-B Cmr ribonucleoprotein (RNP) complex, an elongated RNP with Cmr2 and Cmr3 as the base, with Cmr4 and Cmr5 forming a helical core along the mature crRNA (39 or 45 nt in length), while the complex is capped by Cmr6 and Cmr1. The 5' end of the crRNA is bound to Cmr2 and Cmr3, while Cmr6 and a Cmr1 subunit (Cmr1-1 or Cmr1-2) cap the 3' end of the crRNA. The target RNA lies antiparallel to the crRNA, with its 5' end near Cmr1 and Cmr6 and its 3' end near Cmr2 and Cmr3; major target cleavage occurs nears the junction of Cmr1/Cmr6 and Cmr4/Cmr, with minor cleavage occurring at 6 nt intervals which coincide with the proposed spacing of Cmr4 subunits. Interacts with Cmr4. Interacts with Cmr2, Cmr4 and Cmr6.

The protein resides in the cytoplasm. In terms of biological role, CRISPR (clustered regularly interspaced short palindromic repeat), is an adaptive immune system that provides protection against mobile genetic elements (viruses, transposable elements and conjugative plasmids). CRISPR clusters contain sequences complementary to antecedent mobile elements and target invading nucleic acids. CRISPR clusters are transcribed and processed into CRISPR RNA (crRNA), formerly called psiRNA (prokaryotic silencing) in this organism. Part of the Cmr ribonucleoprotein complex which has divalent cation-dependent endoribonuclease activity specific for ssRNA complementary to the crRNA (target NRA), generating 5' hydroxy- and 3' phosphate or 2'-3' cyclic phosphate termini. Cmr4 is probably the subunit that cleaves target RNA. Cmr complex does not cleave ssDNA complementary to the crRNA. Cleavage of invading RNA is guided by the crRNA; substrate cleavage occurs a fixed distance (14 nt) from the 3' end of the crRNA. In vitro reconstitution shows Cmr1-2 and Cmr5 are not absolutely necessary for target cleavage. The polypeptide is CRISPR system Cmr subunit Cmr5 (Pyrococcus furiosus (strain ATCC 43587 / DSM 3638 / JCM 8422 / Vc1)).